We begin with the raw amino-acid sequence, 298 residues long: UDP-3-O-acyl-N-acetylglucosamine deacetylase (298 aa).

Positions 80, 239, and 243 each coordinate Zn(2+). The active-site Proton donor is the His266.

This sequence belongs to the LpxC family. Zn(2+) is required as a cofactor.

It carries out the reaction a UDP-3-O-[(3R)-3-hydroxyacyl]-N-acetyl-alpha-D-glucosamine + H2O = a UDP-3-O-[(3R)-3-hydroxyacyl]-alpha-D-glucosamine + acetate. Its pathway is glycolipid biosynthesis; lipid IV(A) biosynthesis; lipid IV(A) from (3R)-3-hydroxytetradecanoyl-[acyl-carrier-protein] and UDP-N-acetyl-alpha-D-glucosamine: step 2/6. In terms of biological role, catalyzes the hydrolysis of UDP-3-O-myristoyl-N-acetylglucosamine to form UDP-3-O-myristoylglucosamine and acetate, the committed step in lipid A biosynthesis. The chain is UDP-3-O-acyl-N-acetylglucosamine deacetylase from Blochmanniella floridana.